The chain runs to 479 residues: Adenosylhomocysteinase (479 aa).

Residues Thr-65, Asp-144, and Glu-204 each coordinate substrate. Position 205–207 (205–207 (TTT)) interacts with NAD(+). The substrate site is built by Lys-234 and Asp-238. Residues Asn-239, 268 to 273 (GYGDVG), Glu-291, Asn-326, 347 to 349 (IGH), and Asn-392 each bind NAD(+).

Belongs to the adenosylhomocysteinase family. Requires NAD(+) as cofactor.

Its subcellular location is the cytoplasm. It carries out the reaction S-adenosyl-L-homocysteine + H2O = L-homocysteine + adenosine. It functions in the pathway amino-acid biosynthesis; L-homocysteine biosynthesis; L-homocysteine from S-adenosyl-L-homocysteine: step 1/1. Its function is as follows. May play a key role in the regulation of the intracellular concentration of adenosylhomocysteine. This Variovorax paradoxus (strain S110) protein is Adenosylhomocysteinase.